A 226-amino-acid chain; its full sequence is 7-cyano-7-deazaguanine synthase (226 aa).

8-18 lines the ATP pocket; sequence ISGGLDSTTCL. Residues C188, C198, C201, and C204 each contribute to the Zn(2+) site.

Belongs to the QueC family. It depends on Zn(2+) as a cofactor.

The catalysed reaction is 7-carboxy-7-deazaguanine + NH4(+) + ATP = 7-cyano-7-deazaguanine + ADP + phosphate + H2O + H(+). It participates in purine metabolism; 7-cyano-7-deazaguanine biosynthesis. Its function is as follows. Catalyzes the ATP-dependent conversion of 7-carboxy-7-deazaguanine (CDG) to 7-cyano-7-deazaguanine (preQ(0)). This is 7-cyano-7-deazaguanine synthase from Coxiella burnetii (strain RSA 493 / Nine Mile phase I).